Reading from the N-terminus, the 120-residue chain is NAD(P)H-quinone oxidoreductase subunit 3, chloroplastic (120 aa).

A run of 3 helical transmembrane segments spans residues 9–29 (YFWL…PISS), 64–84 (MFAS…PWAM), and 89–109 (LGVP…VGSV).

Belongs to the complex I subunit 3 family. In terms of assembly, NDH is composed of at least 16 different subunits, 5 of which are encoded in the nucleus.

It localises to the plastid. The protein localises to the chloroplast thylakoid membrane. The enzyme catalyses a plastoquinone + NADH + (n+1) H(+)(in) = a plastoquinol + NAD(+) + n H(+)(out). It catalyses the reaction a plastoquinone + NADPH + (n+1) H(+)(in) = a plastoquinol + NADP(+) + n H(+)(out). Its function is as follows. NDH shuttles electrons from NAD(P)H:plastoquinone, via FMN and iron-sulfur (Fe-S) centers, to quinones in the photosynthetic chain and possibly in a chloroplast respiratory chain. The immediate electron acceptor for the enzyme in this species is believed to be plastoquinone. Couples the redox reaction to proton translocation, and thus conserves the redox energy in a proton gradient. The sequence is that of NAD(P)H-quinone oxidoreductase subunit 3, chloroplastic from Huperzia lucidula (Shining clubmoss).